The sequence spans 107 residues: U-scoloptoxin(18)-Er1a (107 aa).

A signal peptide spans 1 to 21; that stretch reads MQRFLCLVACSVVLLVLGIVA.

This sequence belongs to the scoloptoxin-18 family. Contains 5 disulfide bonds. As to expression, expressed by the venom gland.

It is found in the secreted. The polypeptide is U-scoloptoxin(18)-Er1a (Ethmostigmus rubripes (Giant centipede)).